The primary structure comprises 525 residues: uncharacterized protein (525 aa).

The signal sequence occupies residues 1–21 (MLECLSALLVLFAGGGGSVLA). Topologically, residues 22–448 (AVQSKTVADP…ISAASQLDKR (427 aa)) are extracellular. The disordered stretch occupies residues 242-264 (KVSSENCSKDTDDKSGSKKERNT). A helical membrane pass occupies residues 449–469 (IFIFTAITVSITTLMMLGFSY). Topologically, residues 470-525 (RSRVSFRDHSIDDSDDDNDWSDDEVEFDEEYFYSLPVSIPEKGISLDKMAQQLGVE) are cytoplasmic.

Its subcellular location is the membrane. This is an uncharacterized protein from Saccharomyces cerevisiae (strain YJM789) (Baker's yeast).